Here is a 176-residue protein sequence, read N- to C-terminus: Protein GrpE (176 aa).

The segment at Met-1–Glu-31 is disordered.

Belongs to the GrpE family. As to quaternary structure, homodimer.

The protein localises to the cytoplasm. Its function is as follows. Participates actively in the response to hyperosmotic and heat shock by preventing the aggregation of stress-denatured proteins, in association with DnaK and GrpE. It is the nucleotide exchange factor for DnaK and may function as a thermosensor. Unfolded proteins bind initially to DnaJ; upon interaction with the DnaJ-bound protein, DnaK hydrolyzes its bound ATP, resulting in the formation of a stable complex. GrpE releases ADP from DnaK; ATP binding to DnaK triggers the release of the substrate protein, thus completing the reaction cycle. Several rounds of ATP-dependent interactions between DnaJ, DnaK and GrpE are required for fully efficient folding. The polypeptide is Protein GrpE (Campylobacter jejuni subsp. doylei (strain ATCC BAA-1458 / RM4099 / 269.97)).